The sequence spans 371 residues: Polygalacturonase (371 aa).

A signal peptide spans 1-19 (MPSYLRNLVWATLAAGLVS). Residues 20 to 34 (AAPTPSRVSDLTKKS) constitute a propeptide that is removed on maturation. A disulfide bridge links Cys38 with Cys53. 7 PbH1 repeats span residues 95 to 117 (GPLI…VINA), 165 to 195 (SDNL…DISE), 196 to 217 (STGV…AINS), 218 to 238 (GQNI…SIGS), 247 to 268 (VKNV…RIKT), 276 to 298 (VSDV…VIEQ), and 310 to 355 (TSGV…DITS). The active-site Proton donor is the Asp210. An intrachain disulfide couples Cys212 to Cys228. His232 is an active-site residue. A glycan (N-linked (GlcNAc...) asparagine) is linked at Asn249. 2 disulfide bridges follow: Cys338–Cys343 and Cys362–Cys371.

It belongs to the glycosyl hydrolase 28 family.

It is found in the secreted. The enzyme catalyses (1,4-alpha-D-galacturonosyl)n+m + H2O = (1,4-alpha-D-galacturonosyl)n + (1,4-alpha-D-galacturonosyl)m.. This Penicillium janthinellum (Penicillium vitale) protein is Polygalacturonase.